A 509-amino-acid polypeptide reads, in one-letter code: Transmembrane protein 102 (509 aa).

The Extracellular segment spans residues 1 to 312 (MASTVWGGAP…VLLATPEPPR (312 aa)). The tract at residues 167 to 236 (PPVPEESDMT…NPETPEPLET (70 aa)) is disordered. Basic and acidic residues predominate over residues 174–204 (DMTHQTHSKESPTDRENSVDPSHDYVPEPEP). The segment covering 207–224 (SLQKSSSDLSESQSSYKD) has biased composition (low complexity). Residues 313–329 (HLLLFDLIPVVTVTGWP) traverse the membrane as a helical segment. Residues 330-509 (DTARSHSWAG…GLAGVGGGTH (180 aa)) lie on the Cytoplasmic side of the membrane.

Interacts with CSF2RB; this interaction occurs preferentially in the absence of CSF2.

The protein resides in the cell membrane. Selectively involved in CSF2 deprivation-induced apoptosis via a mitochondria-dependent pathway. This is Transmembrane protein 102 (Tmem102) from Mus musculus (Mouse).